A 480-amino-acid polypeptide reads, in one-letter code: Probable histone deacetylase 1-B (480 aa).

The interval 10-321 (KVCYYYDGDV…WTYETAVALD (312 aa)) is histone deacetylase. His141 is an active-site residue. The tract at residues 387–480 (DSVHDDSGEE…KRVKEETKSV (94 aa)) is disordered. The span at 401–416 (PDKRISIRSSDKRIAC) shows a compositional bias: basic and acidic residues. The span at 417–427 (DEEFSDSEDEG) shows a compositional bias: acidic residues. Basic and acidic residues predominate over residues 443–480 (VKTEEEKEGEDKKDVKEEEKAKDEKTDSKRVKEETKSV).

This sequence belongs to the histone deacetylase family. HD type 1 subfamily. As to quaternary structure, found in a large complex with RBBP4 and MI-2.

The protein localises to the nucleus. It localises to the cytoplasm. The enzyme catalyses N(6)-acetyl-L-lysyl-[histone] + H2O = L-lysyl-[histone] + acetate. It carries out the reaction N(6)-acetyl-L-lysyl-[protein] + H2O = L-lysyl-[protein] + acetate. The catalysed reaction is N(6)-(2E)-butenoyl-L-lysyl-[protein] + H2O = (2E)-2-butenoate + L-lysyl-[protein]. Histone deacetylase that catalyzes the deacetylation of lysine residues on the N-terminal part of the core histones (H2A, H2B, H3 and H4). Histone deacetylation gives a tag for epigenetic repression and plays an important role in transcriptional regulation, cell cycle progression and developmental events. Histone deacetylases act via the formation of large multiprotein complexes. Also functions as a deacetylase for non-histone proteins. In addition to protein deacetylase activity, also has protein-lysine deacylase activity: acts as a protein decrotonylase by mediating decrotonylation ((2E)-butenoyl) of histones. The chain is Probable histone deacetylase 1-B (hdac1-b) from Xenopus laevis (African clawed frog).